We begin with the raw amino-acid sequence, 365 residues long: Centrosomal protein of 41 kDa B (365 aa).

The segment covering 1–14 has biased composition (basic and acidic residues); the sequence is MSAKRSIGDPEILK. Disordered stretches follow at residues 1 to 23 and 104 to 123; these read MSAKRSIGDPEILKKRIPQNQKY and EFLTDRPNGKGSPVSESKSP. Positions 177–274 constitute a Rhodanese domain; that stretch reads EDCPFLLLDV…ISQKFPQGLT (98 aa). The tract at residues 329–365 is disordered; sequence TSTPSRLRLDSRNSKVPSSASSARSLSSTSSHSKPWK. Low complexity predominate over residues 342–365; the sequence is SKVPSSASSARSLSSTSSHSKPWK.

Belongs to the CEP41 family.

Its subcellular location is the cytoplasm. The protein localises to the cytoskeleton. The protein resides in the microtubule organizing center. It is found in the centrosome. It localises to the cell projection. Its subcellular location is the cilium. The protein localises to the cilium basal body. Required during ciliogenesis for tubulin glutamylation in cilium. Probably acts by participating in the transport of tubulin polyglutamylases between the basal body and the cilium. The polypeptide is Centrosomal protein of 41 kDa B (cep41-b) (Xenopus laevis (African clawed frog)).